A 325-amino-acid chain; its full sequence is GMP reductase (325 aa).

The Thioimidate intermediate role is filled by Cys-173. NADP(+) is bound at residue 202 to 225 (IIADGGIHEHGDIAKSIRFGATMV).

Belongs to the IMPDH/GMPR family. GuaC type 2 subfamily.

It carries out the reaction IMP + NH4(+) + NADP(+) = GMP + NADPH + 2 H(+). Catalyzes the irreversible NADPH-dependent deamination of GMP to IMP. It functions in the conversion of nucleobase, nucleoside and nucleotide derivatives of G to A nucleotides, and in maintaining the intracellular balance of A and G nucleotides. This is GMP reductase from Albidiferax ferrireducens (strain ATCC BAA-621 / DSM 15236 / T118) (Rhodoferax ferrireducens).